Reading from the N-terminus, the 390-residue chain is Chorismate synthase (390 aa).

NADP(+)-binding residues include Arg48 and Arg54. FMN is bound by residues 132–134 (RSS), 244–245 (NA), Gly289, 304–308 (KPTSS), and Arg330. The tract at residues 362–390 (VGAHPAGAHPAGADPAGTHPGGPGGFQPG) is disordered. Residues 363–379 (GAHPAGAHPAGADPAGT) show a composition bias toward low complexity. Gly residues predominate over residues 380-390 (HPGGPGGFQPG).

Belongs to the chorismate synthase family. In terms of assembly, homotetramer. The cofactor is FMNH2.

It catalyses the reaction 5-O-(1-carboxyvinyl)-3-phosphoshikimate = chorismate + phosphate. The protein operates within metabolic intermediate biosynthesis; chorismate biosynthesis; chorismate from D-erythrose 4-phosphate and phosphoenolpyruvate: step 7/7. Its function is as follows. Catalyzes the anti-1,4-elimination of the C-3 phosphate and the C-6 proR hydrogen from 5-enolpyruvylshikimate-3-phosphate (EPSP) to yield chorismate, which is the branch point compound that serves as the starting substrate for the three terminal pathways of aromatic amino acid biosynthesis. This reaction introduces a second double bond into the aromatic ring system. This is Chorismate synthase from Methylobacterium sp. (strain 4-46).